The sequence spans 142 residues: Large ribosomal subunit protein uL11 (142 aa).

Belongs to the universal ribosomal protein uL11 family. In terms of assembly, part of the ribosomal stalk of the 50S ribosomal subunit. Interacts with L10 and the large rRNA to form the base of the stalk. L10 forms an elongated spine to which L12 dimers bind in a sequential fashion forming a multimeric L10(L12)X complex. Post-translationally, one or more lysine residues are methylated.

Forms part of the ribosomal stalk which helps the ribosome interact with GTP-bound translation factors. The chain is Large ribosomal subunit protein uL11 from Mycobacterium leprae (strain Br4923).